The chain runs to 332 residues: L-lactate dehydrogenase C chain (332 aa).

The residue at position 2 (Ser2) is a Blocked amino end (Ser). NAD(+)-binding positions include 29–57 (GNVGMACAISILLKGLADELALVDADENK) and Arg99. Substrate is bound by residues Arg106, Asn138, and Arg169. Asn138 contributes to the NAD(+) binding site. His193 serves as the catalytic Proton acceptor. Thr248 provides a ligand contact to substrate.

It belongs to the LDH/MDH superfamily. LDH family. In terms of assembly, homotetramer. Interacts with RABL2/RABL2A; binds preferentially to GTP-bound RABL2.

The protein resides in the cytoplasm. The enzyme catalyses (S)-lactate + NAD(+) = pyruvate + NADH + H(+). Its pathway is fermentation; pyruvate fermentation to lactate; (S)-lactate from pyruvate: step 1/1. Its function is as follows. Possible role in sperm motility. This Rattus norvegicus (Rat) protein is L-lactate dehydrogenase C chain (Ldhc).